Reading from the N-terminus, the 144-residue chain is IgW chain C region, secreted form 1/3 (144 aa).

The Ig-like domain occupies 1–82 (VYNQTTAVLG…AGSRFNDRIS (82 aa)). Residues Asn3, Asn43, and Asn123 are each glycosylated (N-linked (GlcNAc...) asparagine). Cys11 and Cys68 are oxidised to a cystine. Residues 87 to 144 (KGGTINLPVPGGNTPCTCPPCSCSGCMPKLVYQTDLNVTLENGGQLQYNCHQQACKIK) form a secretory tail region.

As to expression, expressed mainly in lymphoid tissues including spleen, epigonal organ and circulating lymphocytes.

The protein localises to the secreted. The protein is IgW chain C region, secreted form 1/3 of Heterodontus francisci (Horn shark).